Consider the following 554-residue polypeptide: (E)-nerolidol synthase TPS18VF (554 aa).

(2E,6E)-farnesyl diphosphate is bound by residues Arg-276, Asp-313, Asp-317, Arg-455, and Asp-458. The Mg(2+) site is built by Asp-313 and Asp-317. A DDXXD motif motif is present at residues 313-317; the sequence is DDIFD. Mg(2+) is bound by residues Asp-458, Ser-462, and Glu-466.

The protein belongs to the terpene synthase family. Tpsb subfamily. It depends on Mg(2+) as a cofactor. The cofactor is Mn(2+). Highly expressed in glandular trichomes.

It carries out the reaction (2E,6E)-farnesyl diphosphate + H2O = (6E)-nerolidol + diphosphate. It catalyses the reaction (2E)-geranyl diphosphate + H2O = (S)-linalool + diphosphate. It participates in secondary metabolite biosynthesis; terpenoid biosynthesis. Functionally, involved in sesquiterpene olefins biosynthesis, constituants of cannabinoids and terpenoids-rich resins. Catalyzes primarily the conversion of (2E)-farnesyl diphosphate to (E)-nerolidol, and the conversion of (2E)-geranyl diphosphate to (+)linalool. In Cannabis sativa (Hemp), this protein is (E)-nerolidol synthase TPS18VF.